Reading from the N-terminus, the 666-residue chain is MQHVNHSSFDKASKAGFIIALGIVYGDIGTSPLYTMQSLVENQGGISSVTESFILGSISLIIWTLTLITTIKYVLVALKADNHHEGGIFSLYTLVRKMTPWLIVPAVIGGATLLSDGALTPAVTVTSAVEGLKVVPSLQHIFQNQSNVIFATLFILLLLFAIQRFGTGVIGKLFGPIMFIWFAFLGISGLLNSFAHPEVFKAINPYYGLKLLFSPENHKGIFILGSIFLATTGAEALYSDLGHVGRGNIHVSWPFVKVAIILSYCGQGAWILANKNAGNELNPFFASIPSQFTMHVVILATLAAIIASQALISGSFTLVSEAMRLKIFPQFRSTYPGDNIGQTYIPVINWFLFAITTSIVLLFKTSAHMEAAYGLAITITMLMTTILLSFFLIQKGVKRGLVLLMMIFFGILEGIFFLASAVKFMHGGYVVVIIAVAIIFIMTIWYKGSKIVSRYVKLLDLKDYIGQLDKLRHDHRYPIYHTNVVYLTNRMEEDMIDKSIMYSILDKRPKKAQVYWFVNIKVTDEPYTAEYKVDMMGTDFIVKVELYLGFKMRQTVSRYLRTIVEELLESGRLPKQGKTYSVRPDSNVGDFRFIVLDERFSSSQNLKPGERFVMLMKSSIKHWTATPIRWFGLQFSEVTTEVVPLIFTANRGLPIKEKSELTTTGD.

Helical transmembrane passes span 16–36, 58–78, 99–119, 141–161, 167–187, 221–241, 253–273, 292–312, 343–363, 373–393, 402–422, and 424–444; these read GFII…LYTM, ISLI…LVAL, TPWL…DGAL, IFQN…LLFA, TGVI…FLGI, IFIL…YSDL, WPFV…WILA, FTMH…QALI, TYIP…VLLF, YGLA…FFLI, VLLM…ASAV, and FMHG…IMTI.

The protein belongs to the HAK/KUP transporter (TC 2.A.72) family.

It localises to the cell membrane. It carries out the reaction K(+)(in) + H(+)(in) = K(+)(out) + H(+)(out). In terms of biological role, transport of potassium into the cell. Likely operates as a K(+):H(+) symporter. This chain is Probable potassium transport system protein Kup, found in Streptococcus agalactiae serotype V (strain ATCC BAA-611 / 2603 V/R).